The primary structure comprises 175 residues: Large ribosomal subunit protein uL10 (175 aa).

Belongs to the universal ribosomal protein uL10 family. Part of the ribosomal stalk of the 50S ribosomal subunit. The N-terminus interacts with L11 and the large rRNA to form the base of the stalk. The C-terminus forms an elongated spine to which L12 dimers bind in a sequential fashion forming a multimeric L10(L12)X complex.

Its function is as follows. Forms part of the ribosomal stalk, playing a central role in the interaction of the ribosome with GTP-bound translation factors. The polypeptide is Large ribosomal subunit protein uL10 (Synechococcus sp. (strain CC9902)).